The sequence spans 282 residues: Pantothenate synthetase (282 aa).

30–37 provides a ligand contact to ATP; the sequence is MGYLHEGH. Histidine 37 serves as the catalytic Proton donor. Position 61 (glutamine 61) interacts with (R)-pantoate. Beta-alanine is bound at residue glutamine 61. 148–151 serves as a coordination point for ATP; the sequence is GQKD. A (R)-pantoate-binding site is contributed by glutamine 154. ATP-binding positions include valine 177 and 185-188; that span reads MSSR.

The protein belongs to the pantothenate synthetase family. As to quaternary structure, homodimer.

It is found in the cytoplasm. The enzyme catalyses (R)-pantoate + beta-alanine + ATP = (R)-pantothenate + AMP + diphosphate + H(+). It participates in cofactor biosynthesis; (R)-pantothenate biosynthesis; (R)-pantothenate from (R)-pantoate and beta-alanine: step 1/1. Functionally, catalyzes the condensation of pantoate with beta-alanine in an ATP-dependent reaction via a pantoyl-adenylate intermediate. The polypeptide is Pantothenate synthetase (Syntrophomonas wolfei subsp. wolfei (strain DSM 2245B / Goettingen)).